We begin with the raw amino-acid sequence, 322 residues long: Putative ankyrin repeat protein L897 (322 aa).

ANK repeat units lie at residues 88-117 (DNEY…SYDM), 181-210 (NIID…FWAN), and 248-277 (NKNE…QTDH).

The polypeptide is Putative ankyrin repeat protein L897 (Acanthamoeba polyphaga (Amoeba)).